The primary structure comprises 426 residues: MRIEDLRKEDWKLNERLEYLAKRGEILEEEYEKSVKEILKRVREEGDRAVIEFTKKFDGVELTPENMEVPFEELEKAYEEIEPEVREALEFAENRIRVFHEKQLENSFFKEEEGIILGQKVVPLEKVGVYVPGGKAAYPSTVLMNVVPASVAGVEEIIMVSPKPNKYTLAAAYIAGVSRVFQVGGAQAIGALAYGTEKIPKVDKIVGPGNIYVALAKKLVFGTVDIDMIAGPSEVLVIADERANPTWVAADMLSQAEHDELAASILLTPSEELANKVKEEVERLLSQLERKEIAQKSLEKFGTIFLVKDLYHACEVANYIAPEHLEVMVREPMALLPELKHAGAIFLGDYTTEPLGDYVLGPNHTLPTGGSTRFFSPLGVYDFIKRSSVLYVSREGFKRVANQAEAIAKAEGLTAHALAVKVRKND.

Positions 130, 187, and 210 each coordinate NAD(+). 3 residues coordinate substrate: Ser233, Gln255, and His258. 2 residues coordinate Zn(2+): Gln255 and His258. Active-site proton acceptor residues include Glu323 and His324. 4 residues coordinate substrate: His324, Asp357, Glu411, and His416. Residue Asp357 participates in Zn(2+) binding. A Zn(2+)-binding site is contributed by His416.

It belongs to the histidinol dehydrogenase family. It depends on Zn(2+) as a cofactor.

It catalyses the reaction L-histidinol + 2 NAD(+) + H2O = L-histidine + 2 NADH + 3 H(+). It participates in amino-acid biosynthesis; L-histidine biosynthesis; L-histidine from 5-phospho-alpha-D-ribose 1-diphosphate: step 9/9. In terms of biological role, catalyzes the sequential NAD-dependent oxidations of L-histidinol to L-histidinaldehyde and then to L-histidine. The sequence is that of Histidinol dehydrogenase (hisD) from Aquifex aeolicus (strain VF5).